Consider the following 445-residue polypeptide: 3-phosphoshikimate 1-carboxyvinyltransferase (445 aa).

The 3-phosphoshikimate site is built by Lys21, Ser22, and Arg26. Lys21 is a binding site for phosphoenolpyruvate. Positions 92 and 120 each coordinate phosphoenolpyruvate. 3-phosphoshikimate-binding residues include Ser165, Gln166, Asp307, and Lys334. Residue Gln166 participates in phosphoenolpyruvate binding. The Proton acceptor role is filled by Asp307. Phosphoenolpyruvate contacts are provided by Arg338, Arg379, and Lys405.

This sequence belongs to the EPSP synthase family. As to quaternary structure, monomer.

It is found in the cytoplasm. The enzyme catalyses 3-phosphoshikimate + phosphoenolpyruvate = 5-O-(1-carboxyvinyl)-3-phosphoshikimate + phosphate. It functions in the pathway metabolic intermediate biosynthesis; chorismate biosynthesis; chorismate from D-erythrose 4-phosphate and phosphoenolpyruvate: step 6/7. Its function is as follows. Catalyzes the transfer of the enolpyruvyl moiety of phosphoenolpyruvate (PEP) to the 5-hydroxyl of shikimate-3-phosphate (S3P) to produce enolpyruvyl shikimate-3-phosphate and inorganic phosphate. In Chlamydia pneumoniae (Chlamydophila pneumoniae), this protein is 3-phosphoshikimate 1-carboxyvinyltransferase.